A 267-amino-acid polypeptide reads, in one-letter code: 4-hydroxy-tetrahydrodipicolinate reductase (267 aa).

NAD(+)-binding positions include 12–17, D38, 100–102, and 126–129; these read GARGRM, GTT, and APNF. The active-site Proton donor/acceptor is H156. Residue H157 participates in (S)-2,3,4,5-tetrahydrodipicolinate binding. K160 functions as the Proton donor in the catalytic mechanism. 166–167 contributes to the (S)-2,3,4,5-tetrahydrodipicolinate binding site; that stretch reads GT.

The protein belongs to the DapB family.

Its subcellular location is the cytoplasm. The catalysed reaction is (S)-2,3,4,5-tetrahydrodipicolinate + NAD(+) + H2O = (2S,4S)-4-hydroxy-2,3,4,5-tetrahydrodipicolinate + NADH + H(+). The enzyme catalyses (S)-2,3,4,5-tetrahydrodipicolinate + NADP(+) + H2O = (2S,4S)-4-hydroxy-2,3,4,5-tetrahydrodipicolinate + NADPH + H(+). The protein operates within amino-acid biosynthesis; L-lysine biosynthesis via DAP pathway; (S)-tetrahydrodipicolinate from L-aspartate: step 4/4. Its function is as follows. Catalyzes the conversion of 4-hydroxy-tetrahydrodipicolinate (HTPA) to tetrahydrodipicolinate. The sequence is that of 4-hydroxy-tetrahydrodipicolinate reductase from Bacillus pumilus (strain SAFR-032).